The primary structure comprises 740 residues: Vertnin (740 aa).

Disordered stretches follow at residues 485–506, 560–616, and 653–673; these read EAGE…RGLI, PGMQ…DQNV, and TQSQ…APGG. The span at 578–604 shows a compositional bias: basic and acidic residues; sequence QKPEGRQKPEEQQKPEGRQKPEGRQKP. Residues 653-667 are compositionally biased toward polar residues; it reads TQSQPHSGSLPSQTL.

Belongs to the vertnin family.

Its subcellular location is the nucleus. In terms of biological role, acts as a transcription factor that regulates development of thoracic vertebrae. The sequence is that of Vertnin (Vrtn) from Mus musculus (Mouse).